Reading from the N-terminus, the 146-residue chain is Globin-2B (146 aa).

The region spanning 9-146 (QLTADVKKDL…KLVGVVQAAL (138 aa)) is the Globin domain. H101 provides a ligand contact to heme b.

The protein belongs to the globin family. Homodimer.

This is Globin-2B from Anadara trapezia (Sydney cockle).